Reading from the N-terminus, the 210-residue chain is MPNTLQDRFFTTCDAALRTLFVTPHAERACPTLPGEATALTDAEKVQSGALMRVNHVGEVCAQALYTAQAFATKNEALRAHFTKASADETNHLAWTQQRLDELGARPSLLNPLWYGAAFGLGLLAGRLGDPISLGFVVETENQVEAHLESHLSLLPANDHASRAIVAQMKDDEVRHALDAQKAGAVPLPPPVKSLMTAAAKVMTTVAHRI.

Positions 59, 89, 92, 141, 173, and 176 each coordinate Fe cation.

It belongs to the COQ7 family. The cofactor is Fe cation.

Its subcellular location is the cell membrane. The enzyme catalyses a 5-methoxy-2-methyl-3-(all-trans-polyprenyl)benzene-1,4-diol + AH2 + O2 = a 3-demethylubiquinol + A + H2O. It functions in the pathway cofactor biosynthesis; ubiquinone biosynthesis. Functionally, catalyzes the hydroxylation of 2-nonaprenyl-3-methyl-6-methoxy-1,4-benzoquinol during ubiquinone biosynthesis. This chain is 3-demethoxyubiquinol 3-hydroxylase, found in Albidiferax ferrireducens (strain ATCC BAA-621 / DSM 15236 / T118) (Rhodoferax ferrireducens).